Reading from the N-terminus, the 116-residue chain is Putative pterin-4-alpha-carbinolamine dehydratase (116 aa).

The protein belongs to the pterin-4-alpha-carbinolamine dehydratase family.

The catalysed reaction is (4aS,6R)-4a-hydroxy-L-erythro-5,6,7,8-tetrahydrobiopterin = (6R)-L-erythro-6,7-dihydrobiopterin + H2O. The chain is Putative pterin-4-alpha-carbinolamine dehydratase from Xylella fastidiosa (strain 9a5c).